The chain runs to 357 residues: Protein BMRF2 (357 aa).

At 1-11 the chain is on the virion surface side; the sequence is MFSCKQHLSLG. A membrane pass occupies residues 12-32; that stretch reads ACVFCLGLLASTPFIWCFVFA. Topologically, residues 33 to 46 are virion surface; sequence NLLSLEIFSPWQTH. A membrane pass occupies residues 47–67; that stretch reads VYRLGFPTACLMAVLWTLVPA. Residues 68 to 70 lie on the Virion surface side of the membrane; sequence KHA. Over 71–91 the chain traverses the membrane; sequence VRAVTPAIMLNIASALIFFSL. The Virion surface portion of the chain corresponds to 92–98; the sequence is RVYSTST. A transmembrane helix spans residues 99-121; the sequence is WVSAPCLFLANLPLLCLWPRLAI. Residues 122–133 are Virion surface-facing; it reads EIVYICPAIHQR. A membrane pass occupies residues 134–154; that stretch reads FFELGLLLACTIFALSVVSRA. Residues 155–158 lie on the Virion surface side of the membrane; that stretch reads LEVS. At 159-179 the chain is embedded in the membrane; sequence AVFMSPFFIFLALGSGSLAGA. The Virion surface segment spans residues 180-217; the sequence is RRNQIYTSGLERRRSIFCARGDHSVASLKETLHKCPWD. The Integrin binding site motif lies at 199 to 201; sequence RGD. The chain crosses the lipid bilayer at residues 218–238; the sequence is LLAISALTVLVVCVMIVLHVH. Topologically, residues 239–240 are virion surface; that stretch reads AE. The segment at 241 to 261 is a transmembrane helix; that stretch reads VFFGLSRYLPLFLCGAMASGG. At 262–267 the chain is on the virion surface side; that stretch reads LYLGHS. A transmembrane span lies at residues 268–288; sequence SIIACVMATLCTLTSVVVYFL. The Virion surface portion of the chain corresponds to 289-298; that stretch reads HETLGPLGKT. Over 299–319 the chain traverses the membrane; it reads VLFISIFVYYFSGVAALSAAM. The Virion surface portion of the chain corresponds to 320–335; the sequence is RYKLKKFVNGPLVHLR. The chain crosses the lipid bilayer at residues 336 to 356; that stretch reads VVYMCCFVFTFCEYLLVTFIK. Residue serine 357 is a topological domain, virion surface.

This sequence belongs to the herpesviridae BMRF2 family. As to quaternary structure, interacts with BDLF2. Interacts with host beta1 integrin family. In terms of processing, extensively glycosylated by O-linked oligosaccharides.

Its subcellular location is the virion membrane. The protein resides in the host cell membrane. In terms of biological role, facilitates virus attachment to oral epithelial cells by binding to host beta1 integrin family. Participates in rearrangement of cellular actin to increase intercellular contacts by binding BDLF2 and thereby promote virus cell-to-cell spreading. This is Protein BMRF2 from Homo sapiens (Human).